We begin with the raw amino-acid sequence, 313 residues long: Probable cell division protein WhiA (313 aa).

Residues 276–309 (SLKELGEMLHPKLGKSGVNHRLRKLDEIAERIRK) constitute a DNA-binding region (H-T-H motif).

It belongs to the WhiA family.

In terms of biological role, involved in cell division and chromosome segregation. The polypeptide is Probable cell division protein WhiA (Ruminiclostridium cellulolyticum (strain ATCC 35319 / DSM 5812 / JCM 6584 / H10) (Clostridium cellulolyticum)).